The primary structure comprises 763 residues: Phosphoglycerol transferase I (763 aa).

4 helical membrane passes run 1 to 21 (MSEL…AWKA), 26 to 46 (WWFA…ITLF), 77 to 97 (ILPG…LGWI), and 108 to 128 (FGYS…SPAF).

It belongs to the OpgB family.

It localises to the cell inner membrane. It carries out the reaction a phosphatidylglycerol + a membrane-derived-oligosaccharide D-glucose = a 1,2-diacyl-sn-glycerol + a membrane-derived-oligosaccharide 6-(glycerophospho)-D-glucose.. Its pathway is glycan metabolism; osmoregulated periplasmic glucan (OPG) biosynthesis. Its function is as follows. Transfers a phosphoglycerol residue from phosphatidylglycerol to the membrane-bound nascent glucan backbones. This chain is Phosphoglycerol transferase I, found in Escherichia coli O45:K1 (strain S88 / ExPEC).